Here is a 371-residue protein sequence, read N- to C-terminus: MYEVDMTIVGGGLVGASIAWGLARSGINPLVLDGDDLDLRASRANFGLVWVQGKGLHAPHYALWSDASAKVWPTMTKALSDDSGIDVGLRQAGAYTFALSEEELEAVREDMESIALETNGRAPHFDVLNRQQTLERVPGLGPDVVGSIYCSADGHANALALFHALHTAMQKKGAAYRSNHRVQTIEPTTEGFILKGHGFSVISRRVVLAAGLENERLAPMVGLSCPLKCSKGQILVTEKSQTALPCLSAGMRQADEGGIMIGDSEETDSAKISSSSGISAVLASRALKIFPALSDLNVLRSWTGFRVKTADGIPIYDQSERYPGAFLFACHSGVTLAANHALIVAPQIASGKLEDDLSVFSARRFDAQQAE.

As to quaternary structure, heterodimer of a subunit A and a subunit B.

It functions in the pathway opine metabolism; octopine degradation. Oxidative cleavage of octopine into L-arginine and pyruvate. The polypeptide is Opine oxidase subunit B (ooxB) (Rhizobium meliloti (Ensifer meliloti)).